We begin with the raw amino-acid sequence, 579 residues long: Adenine deaminase (579 aa).

This sequence belongs to the metallo-dependent hydrolases superfamily. Adenine deaminase family. Mn(2+) serves as cofactor.

It catalyses the reaction adenine + H2O + H(+) = hypoxanthine + NH4(+). This chain is Adenine deaminase, found in Listeria monocytogenes serotype 4b (strain F2365).